Reading from the N-terminus, the 212-residue chain is A-kinase-interacting protein 1 (212 aa).

Interacts with PRKACA and RELA.

The protein resides in the nucleus. Functionally, enhances NF-kappa-B transcriptional activity by regulating the nuclear localization of the NF-kappa-B subunit RELA and promoting the phosphorylation of RELA by PRKACA. Regulates the effect of the cAMP-dependent protein kinase signaling pathway on the NF-kappa-B activation cascade. The chain is A-kinase-interacting protein 1 (Akip1) from Mus musculus (Mouse).